A 385-amino-acid polypeptide reads, in one-letter code: 1-deoxy-D-xylulose 5-phosphate reductoisomerase 1 (385 aa).

6 residues coordinate NADPH: Thr-11, Gly-12, Ser-13, Ile-14, Asn-39, and Asn-122. 1-deoxy-D-xylulose 5-phosphate is bound at residue Lys-123. Glu-124 is an NADPH binding site. Asp-148 is a binding site for Mn(2+). 1-deoxy-D-xylulose 5-phosphate-binding residues include Ser-149, Glu-150, Ser-174, and His-197. Glu-150 is a binding site for Mn(2+). Gly-203 is an NADPH binding site. 1-deoxy-D-xylulose 5-phosphate is bound by residues Ser-210, Asn-215, Lys-216, and Glu-219. Glu-219 is a binding site for Mn(2+).

Belongs to the DXR family. It depends on Mg(2+) as a cofactor. Mn(2+) is required as a cofactor.

The catalysed reaction is 2-C-methyl-D-erythritol 4-phosphate + NADP(+) = 1-deoxy-D-xylulose 5-phosphate + NADPH + H(+). The protein operates within isoprenoid biosynthesis; isopentenyl diphosphate biosynthesis via DXP pathway; isopentenyl diphosphate from 1-deoxy-D-xylulose 5-phosphate: step 1/6. In terms of biological role, catalyzes the NADPH-dependent rearrangement and reduction of 1-deoxy-D-xylulose-5-phosphate (DXP) to 2-C-methyl-D-erythritol 4-phosphate (MEP). This chain is 1-deoxy-D-xylulose 5-phosphate reductoisomerase 1, found in Bacillus anthracis.